The following is a 435-amino-acid chain: MADQEADTNIEIWKIKKLIKGLESARGNGTSMISLIMPPRDQVSRVTKMLGDEYGTASNIKSRVNRQSVLSAITSAQQRLKLYNKVPTNGLVLYTGTIVNDDGKEKKVTFDFEPFRPINASLYLCDNKFHTGALNELLESDDKFGFIVMDGNGTLFGTLSGNTREVLHKFTVDLPKKHGRGGQSALRFARLRMEKRHNYVRKTAELATQFYINPATSQPNVAGLILAGSADFKTELSQSELFDPRLQAKILNVVDVSYGGENGFNQAIELSAEILSNVKFIQEKKLIGKYFEEISQDTGKYVFGVEDTLKALEMGAIETLIVWENLDINRYELKNSTSGEIVVKHFGKDQETDQSNFHDAETNAELEVQEKMPLLEWFANEYKRFGCTLEFVTNKSQEGSQFCRGFGGIGGMLRYQLDMRTFDELSDGEVYEDSD.

Alanine 2 carries the post-translational modification N-acetylalanine.

This sequence belongs to the eukaryotic release factor 1 family. In terms of assembly, heterodimer of two subunits, one of which binds GTP. Interacts with OR.

The protein localises to the cytoplasm. Directs the termination of nascent peptide synthesis (translation) in response to the termination codons UAA, UAG and UGA. Modulates plant growth and development. This is Eukaryotic peptide chain release factor subunit 1-2 from Brassica oleracea var. botrytis (Cauliflower).